The primary structure comprises 572 residues: Zyxin (572 aa).

At Ala2 the chain carries N-acetylalanine. The tract at residues 23 to 351 (QKKFGPVVAP…VRSPGAPGPL (329 aa)) is disordered. 2 stretches are compositionally biased toward pro residues: residues 63–78 (IPPP…PPPL) and 93–108 (FPPP…PPAP). A phosphoserine mark is found at Ser116, Ser142, Ser143, Ser169, and Ser170. Residues 143–156 (SIDLEIDSLSSLLD) are compositionally biased toward low complexity. Residue Thr179 is modified to Phosphothreonine. Positions 202–239 (SPSSSQPLPQVPAPAQSQTQFHVQPQPQPKPQVQLHVQ) are enriched in low complexity. A compositionally biased stretch (polar residues) spans 240-252 (SQTQPVSLANTQP). Position 253 is an asymmetric dimethylarginine (Arg253). The span at 253-265 (RGPPASSPAPAPK) shows a compositional bias: pro residues. Position 259 is a phosphoserine (Ser259). An N6-acetyllysine modification is found at Lys265. Ser267 bears the Phosphoserine mark. The residue at position 270 (Thr270) is a Phosphothreonine. Residue Lys272 is modified to N6-acetyllysine. A Phosphothreonine modification is found at Thr274. Lys279 is subject to N6-acetyllysine. Ser281, Ser288, and Ser308 each carry phosphoserine. Over residues 305–318 (GTGSPQPPSFTYAQ) the composition is skewed to polar residues. Residues 319-330 (QREKPRVQEKQH) are compositionally biased toward basic and acidic residues. At Ser344 the chain carries Phosphoserine. LIM zinc-binding domains are found at residues 384 to 443 (CGRC…TLEK), 444 to 503 (CNTC…YAPR), and 504 to 570 (CSVC…TARA).

This sequence belongs to the zyxin/ajuba family. As to quaternary structure, interacts with HPV type 6 protein E6. Does not interact significantly with E6 proteins from HPV types 11, 16, or 18. Interacts, via the Pro-rich regions, with the EVH1 domains of ENAH, EVL and VASP. Interacts with the first LIM domain of TES. Interacts with NEBL (isoform 2). Interacts with SYNPO2. In terms of assembly, (Microbial infection) Interacts with human papillomavirus type 6/HPV6 protein E6. Does not interact significantly with E6 proteins from HPV types 11, 16, or 18.

The protein resides in the cytoplasm. It is found in the cytoskeleton. Its subcellular location is the nucleus. The protein localises to the cell junction. It localises to the focal adhesion. Functionally, adhesion plaque protein. Binds alpha-actinin and the CRP protein. Important for targeting TES and ENA/VASP family members to focal adhesions and for the formation of actin-rich structures. May be a component of a signal transduction pathway that mediates adhesion-stimulated changes in gene expression. The chain is Zyxin (ZYX) from Homo sapiens (Human).